A 659-amino-acid chain; its full sequence is Cysteine-rich receptor-like protein kinase 18 (659 aa).

Positions Met1–Ala27 are cleaved as a signal peptide. Gnk2-homologous domains are found at residues Gln28–Phe131 and Met137–Phe250. Over Gln28–Lys287 the chain is Extracellular. 9 N-linked (GlcNAc...) asparagine glycosylation sites follow: Asn32, Asn57, Asn152, Asn162, Asn179, Asn180, Asn197, Asn275, and Asn279. A helical membrane pass occupies residues Ile288–Ile308. At Ser309 to Arg659 the chain is on the cytoplasmic side. In terms of domain architecture, Protein kinase spans Phe339–Leu611. ATP is bound by residues Leu345–Val353 and Lys367. A Phosphotyrosine modification is found at Tyr412. Residue Asp464 is the Proton acceptor of the active site. Phosphoserine is present on Ser468. Thr504 is subject to Phosphothreonine. Tyr512 is subject to Phosphotyrosine.

It belongs to the protein kinase superfamily. Ser/Thr protein kinase family. CRK subfamily.

It is found in the membrane. The enzyme catalyses L-seryl-[protein] + ATP = O-phospho-L-seryl-[protein] + ADP + H(+). The catalysed reaction is L-threonyl-[protein] + ATP = O-phospho-L-threonyl-[protein] + ADP + H(+). The sequence is that of Cysteine-rich receptor-like protein kinase 18 (CRK18) from Arabidopsis thaliana (Mouse-ear cress).